We begin with the raw amino-acid sequence, 518 residues long: Zinc finger protein 449 (518 aa).

An SCAN box domain is found at 30–112 (RQRFRQFQYR…SLIEDLQREL (83 aa)). Polar residues predominate over residues 292–304 (NPTLGETPENSNL). Positions 292 to 325 (NPTLGETPENSNLEEPLNPKPHKKKSPGEKPHRC) are disordered. 7 C2H2-type zinc fingers span residues 323-345 (HRCP…QRIH), 351-373 (HKCP…QRLH), 379-401 (YECT…QRTH), 407-429 (YKCL…LKTH), 435-457 (HRCH…QRTH), 463-485 (FKCN…LRIH), and 491-513 (YKCT…QVTH).

Belongs to the krueppel C2H2-type zinc-finger protein family.

It localises to the nucleus. In terms of biological role, may be involved in transcriptional regulation. This is Zinc finger protein 449 (ZNF449) from Gorilla gorilla gorilla (Western lowland gorilla).